We begin with the raw amino-acid sequence, 176 residues long: tRNA (cytidine(56)-2'-O)-methyltransferase (176 aa).

S-adenosyl-L-methionine contacts are provided by residues Leu86 and 111–115; that span reads GAEKV.

Belongs to the aTrm56 family. In terms of assembly, homodimer.

The protein localises to the cytoplasm. The enzyme catalyses cytidine(56) in tRNA + S-adenosyl-L-methionine = 2'-O-methylcytidine(56) in tRNA + S-adenosyl-L-homocysteine + H(+). Specifically catalyzes the AdoMet-dependent 2'-O-ribose methylation of cytidine at position 56 in tRNAs. This Methanoregula boonei (strain DSM 21154 / JCM 14090 / 6A8) protein is tRNA (cytidine(56)-2'-O)-methyltransferase.